A 694-amino-acid polypeptide reads, in one-letter code: Methionine--tRNA ligase (694 aa).

Residues 12–22 carry the 'HIGH' region motif; it reads PYANGPLHLGH. Zn(2+)-binding residues include cysteine 143, cysteine 146, cysteine 156, and cysteine 159. Positions 330-334 match the 'KMSKS' region motif; it reads KMSKS. ATP is bound at residue lysine 333. Residues 550–575 show a composition bias toward low complexity; the sequence is LAAPAAPATTSKAAPAKPDTKPAAAA. The interval 550–580 is disordered; sequence LAAPAAPATTSKAAPAKPDTKPAAAANPQSP. The tRNA-binding domain maps to 591-694; that stretch reads DFAKLDLRIG…SGAQPGMPVR (104 aa).

The protein belongs to the class-I aminoacyl-tRNA synthetase family. MetG type 1 subfamily. As to quaternary structure, homodimer. Zn(2+) is required as a cofactor.

Its subcellular location is the cytoplasm. The catalysed reaction is tRNA(Met) + L-methionine + ATP = L-methionyl-tRNA(Met) + AMP + diphosphate. Its function is as follows. Is required not only for elongation of protein synthesis but also for the initiation of all mRNA translation through initiator tRNA(fMet) aminoacylation. The polypeptide is Methionine--tRNA ligase (Xanthomonas oryzae pv. oryzae (strain MAFF 311018)).